The primary structure comprises 367 residues: Chorismate synthase (367 aa).

Residues 41 to 60 form a disordered region; that stretch reads FTHDLQRRASGKSRHTSARR. Residues Arg-48 and Arg-54 each coordinate NADP(+). Residues 125–127, 238–239, Gly-278, 293–297, and Arg-319 contribute to the FMN site; these read RSS, NA, and KPTSS.

Belongs to the chorismate synthase family. As to quaternary structure, homotetramer. It depends on FMNH2 as a cofactor.

It carries out the reaction 5-O-(1-carboxyvinyl)-3-phosphoshikimate = chorismate + phosphate. The protein operates within metabolic intermediate biosynthesis; chorismate biosynthesis; chorismate from D-erythrose 4-phosphate and phosphoenolpyruvate: step 7/7. Catalyzes the anti-1,4-elimination of the C-3 phosphate and the C-6 proR hydrogen from 5-enolpyruvylshikimate-3-phosphate (EPSP) to yield chorismate, which is the branch point compound that serves as the starting substrate for the three terminal pathways of aromatic amino acid biosynthesis. This reaction introduces a second double bond into the aromatic ring system. In Xanthomonas axonopodis pv. citri (strain 306), this protein is Chorismate synthase.